The sequence spans 258 residues: F-box/LRR-repeat protein 25 (258 aa).

Positions 27 to 76 (SDSISNLPDEILHHILSFIPETNLVIRTSVLSKRWRHVWSKTPHLSFEWL) constitute an F-box domain. LRR repeat units follow at residues 101–130 (CTSY…SLAF), 136–161 (CNKF…SLTP), 177–202 (RCNL…SLKF), and 224–249 (RRSC…RLRD).

The chain is F-box/LRR-repeat protein 25 (FBL25) from Arabidopsis thaliana (Mouse-ear cress).